Consider the following 415-residue polypeptide: MSGTTLLIHDLEAAVSPKGSGPLRGRDLGELEVCSPASIAVSGDRIAAVGPPGEVLRDHPPGPGCETVDGRGKAALPGLVDCHTHAAFLGDRADEFELRCRGAGYEEIHASGGGILSTVRATRAGSEEELRAATERHLDWLLRHGTTTAEVKSGYGLDREAELRLLRAIRAAGDAHPVDVRPTFLGAHTVPPEFSGAAEYVEFVVAEVLPEAAPLAEAADVFVERGSFEVPEARRYLEACAGYGLALRLHADQFSERGAVPLAVELGARSADHLESTGGEGVRALGQSATAAVLLPACALFLGLPDPPARALLEAGAIVALATDFNPGSSFCSSLPVVLNLACTRLGLSPAEALCAATANAAYVLGLEGEVGRLSAGYRADILLLDAPDWRYIAYHLGGDHLAAVVKSGGLLPPG.

Fe(3+) is bound by residues H83 and H85. Zn(2+) is bound by residues H83 and H85. Positions 92, 155, and 188 each coordinate 4-imidazolone-5-propanoate. Residue Y155 coordinates N-formimidoyl-L-glutamate. H250 serves as a coordination point for Fe(3+). Residue H250 coordinates Zn(2+). A 4-imidazolone-5-propanoate-binding site is contributed by Q253. Fe(3+) is bound at residue D324. D324 is a Zn(2+) binding site. 2 residues coordinate N-formimidoyl-L-glutamate: N326 and G328. 4-imidazolone-5-propanoate is bound at residue S329.

It belongs to the metallo-dependent hydrolases superfamily. HutI family. The cofactor is Zn(2+). Fe(3+) is required as a cofactor.

The protein resides in the cytoplasm. It carries out the reaction 4-imidazolone-5-propanoate + H2O = N-formimidoyl-L-glutamate. It functions in the pathway amino-acid degradation; L-histidine degradation into L-glutamate; N-formimidoyl-L-glutamate from L-histidine: step 3/3. Catalyzes the hydrolytic cleavage of the carbon-nitrogen bond in imidazolone-5-propanoate to yield N-formimidoyl-L-glutamate. It is the third step in the universal histidine degradation pathway. The sequence is that of Imidazolonepropionase from Rubrobacter xylanophilus (strain DSM 9941 / JCM 11954 / NBRC 16129 / PRD-1).